Reading from the N-terminus, the 366-residue chain is Alcohol dehydrogenase (366 aa).

Residues C41, H62, E63, and D167 each coordinate Zn(2+).

The protein belongs to the zinc-containing alcohol dehydrogenase family. Homotetramer. The cofactor is Zn(2+).

The catalysed reaction is a primary alcohol + NAD(+) = an aldehyde + NADH + H(+). It catalyses the reaction a secondary alcohol + NAD(+) = a ketone + NADH + H(+). The enzyme catalyses (R,R)-butane-2,3-diol + NAD(+) = (R)-acetoin + NADH + H(+). It carries out the reaction an aldehyde + NAD(+) + H2O = a carboxylate + NADH + 2 H(+). In terms of biological role, multifunctional alcohol dehydrogenase exhibiting NAD(+)-dependent dehydrogenase activities for 2,3-butanediol, ethanol and acetaldehyde, and reductase activities for acetoin (NADH-dependent), and diacetyl and acetaldehyde (independently of whether NADH or NADPH is the reductant). The rate of oxidation of 2,3-butanediol is much higher than for the oxidation of ethanol. Has acetaldehyde dehydrogenase activity leading to acetate formation. May function in the release of excess reducing power in the absence of exogenous hydrogen acceptors such as oxygen. The chain is Alcohol dehydrogenase (adh) from Cupriavidus necator (strain ATCC 17699 / DSM 428 / KCTC 22496 / NCIMB 10442 / H16 / Stanier 337) (Ralstonia eutropha).